Consider the following 252-residue polypeptide: Flavin-dependent thymidylate synthase (252 aa).

Residues 7–235 (LDVQLVACST…PTVFSDFETS (229 aa)) enclose the ThyX domain. DUMP-binding positions include 94 to 97 (ELVR), 105 to 109 (QLSQR), and Arg-174. FAD-binding positions include 97 to 99 (RHR) and Gln-105. A ThyX motif motif is present at residues 97 to 107 (RHRHFSFSQLS). Residues 190 to 192 (NFR) and His-196 each bind FAD. Arg-201 is a binding site for dUMP. Arg-201 serves as the catalytic Involved in ionization of N3 of dUMP, leading to its activation.

It belongs to the thymidylate synthase ThyX family. Homotetramer. FAD serves as cofactor.

It carries out the reaction dUMP + (6R)-5,10-methylene-5,6,7,8-tetrahydrofolate + NADPH + H(+) = dTMP + (6S)-5,6,7,8-tetrahydrofolate + NADP(+). Its pathway is pyrimidine metabolism; dTTP biosynthesis. Functionally, catalyzes the reductive methylation of 2'-deoxyuridine-5'-monophosphate (dUMP) to 2'-deoxythymidine-5'-monophosphate (dTMP) while utilizing 5,10-methylenetetrahydrofolate (mTHF) as the methyl donor, and NADPH and FADH(2) as the reductant. The polypeptide is Flavin-dependent thymidylate synthase (Corynebacterium diphtheriae (strain ATCC 700971 / NCTC 13129 / Biotype gravis)).